The sequence spans 535 residues: MELSPRSPPEMLESDCPSPLELKSAPSKKMWIKLRSLLRYMVKQLENGEVNIEELKKNLEYTASLLEAVYIDETRQILDTEDELRELRSDAVPSEVRDWLASTFTQQTRAKGRRAEEKPKFRSIVHAVQAGIFVERMFRRTYTAVGPTYSTAVHNCLKNLDLWCFDVFSLNRAADDHALRTIVFELLTRHSLISRFKIPTVFLMSFLEALETGYGKYKNPYHNQIHAADVTQTVHCFLLRTGMVHCLSEIEVLAIIFAAAIHDYEHTGTTNSFHIQTKSECAILYNDRSVLENHHISSVFRMMQDDEMNIFINLTKDEFVELRALVIEMVLATDMSCHFQQVKSMKTALQQLERIDKSKALSLLLHAADISHPTKQWSVHSRWTKALMEEFFRQGDKEAELGLPFSPLCDRTSTLVAQSQIGFIDFIVEPTFSVLTDVAEKSVQPLADDDSKSKSQPSFQWRQPSLDVDVGDPNPDVISFRSTWTKYIQENKQKWKERAASGITNQMSIDELSPCEEEAPPSPAEDEHNQNGNLD.

Positions 1–21 (MELSPRSPPEMLESDCPSPLE) are disordered. Residues serine 7 and serine 14 each carry the phosphoserine modification. 2 calmodulin-binding regions span residues 26-46 (PSKK…KQLE) and 117-140 (EKPK…MFRR). A PDEase domain is found at 145-502 (VGPTYSTAVH…QKWKERAASG (358 aa)). The active-site Proton donor is the histidine 222. The Zn(2+) site is built by histidine 226, histidine 262, aspartate 263, and aspartate 369. Position 263 (aspartate 263) interacts with Mg(2+). 2 disordered regions span residues 445–474 (PLAD…GDPN) and 495–535 (WKER…GNLD). The segment covering 454-463 (KSQPSFQWRQ) has biased composition (polar residues). 2 positions are modified to phosphoserine: serine 465 and serine 513.

The protein belongs to the cyclic nucleotide phosphodiesterase family. PDE1 subfamily. As to quaternary structure, homodimer. The cofactor is Zn(2+). Mg(2+) is required as a cofactor.

It is found in the cytoplasm. Its subcellular location is the cytosol. The enzyme catalyses a nucleoside 3',5'-cyclic phosphate + H2O = a nucleoside 5'-phosphate + H(+). It catalyses the reaction 3',5'-cyclic GMP + H2O = GMP + H(+). It carries out the reaction 3',5'-cyclic AMP + H2O = AMP + H(+). With respect to regulation, type I PDE are activated by the binding of calmodulin in the presence of Ca(2+). Its function is as follows. Cyclic nucleotide phosphodiesterase with a dual specificity for the second messengers cAMP and cGMP, which are key regulators of many important physiological processes. Has a preference for cGMP as a substrate. The sequence is that of Dual specificity calcium/calmodulin-dependent 3',5'-cyclic nucleotide phosphodiesterase 1B from Cricetulus griseus (Chinese hamster).